Reading from the N-terminus, the 190-residue chain is UPF0301 protein TC_0483 (190 aa).

This sequence belongs to the UPF0301 (AlgH) family.

The chain is UPF0301 protein TC_0483 from Chlamydia muridarum (strain MoPn / Nigg).